We begin with the raw amino-acid sequence, 221 residues long: Ribosomal RNA small subunit methyltransferase G (221 aa).

S-adenosyl-L-methionine is bound by residues Gly90, Leu95, 141-142 (VE), and Arg154.

It belongs to the methyltransferase superfamily. RNA methyltransferase RsmG family.

Its subcellular location is the cytoplasm. The catalysed reaction is guanosine(527) in 16S rRNA + S-adenosyl-L-methionine = N(7)-methylguanosine(527) in 16S rRNA + S-adenosyl-L-homocysteine. Its function is as follows. Specifically methylates the N7 position of guanine in position 527 of 16S rRNA. This Polaromonas naphthalenivorans (strain CJ2) protein is Ribosomal RNA small subunit methyltransferase G.